The sequence spans 133 residues: ATP synthase epsilon chain, chloroplastic (133 aa).

Belongs to the ATPase epsilon chain family. As to quaternary structure, F-type ATPases have 2 components, CF(1) - the catalytic core - and CF(0) - the membrane proton channel. CF(1) has five subunits: alpha(3), beta(3), gamma(1), delta(1), epsilon(1). CF(0) has three main subunits: a, b and c.

Its subcellular location is the plastid. The protein resides in the chloroplast thylakoid membrane. In terms of biological role, produces ATP from ADP in the presence of a proton gradient across the membrane. This chain is ATP synthase epsilon chain, chloroplastic, found in Lactuca sativa (Garden lettuce).